The primary structure comprises 1070 residues: Carbamoyl phosphate synthase large chain (1070 aa).

The interval 1–399 (MPKREDIKKV…SLLKAFKSLD (399 aa)) is carboxyphosphate synthetic domain. ATP-binding residues include Arg129, Arg169, Gly175, Gly176, Glu208, Val210, Glu215, Gly241, Val242, His243, Gln284, and Glu296. The ATP-grasp 1 domain maps to 133-325 (KETMLRIGEK…IARVTAKIAI (193 aa)). The Mg(2+) site is built by Gln284, Glu296, and Asn298. Residues Gln284, Glu296, and Asn298 each contribute to the Mn(2+) site. An oligomerization domain region spans residues 400 to 540 (IDSQLGNKRW…YSTYEDTCET (141 aa)). Residues 541–931 (NPTDRKKILI…YKAELAADNL (391 aa)) are carbamoyl phosphate synthetic domain. Residues 672 to 863 (YVLMQKFGIL…LAKIAARVIA (192 aa)) form the ATP-grasp 2 domain. Residues Arg708, Asp747, Leu749, Glu754, Gly779, Val780, His781, Ser782, Gln822, and Glu834 each coordinate ATP. Residues Gln822, Glu834, and Asn836 each coordinate Mg(2+). Mn(2+) contacts are provided by Gln822, Glu834, and Asn836. The MGS-like domain occupies 930–1070 (NLLPLTGKVF…INEYHKEMGL (141 aa)). An allosteric domain region spans residues 932–1070 (LPLTGKVFLS…INEYHKEMGL (139 aa)).

This sequence belongs to the CarB family. As to quaternary structure, composed of two chains; the small (or glutamine) chain promotes the hydrolysis of glutamine to ammonia, which is used by the large (or ammonia) chain to synthesize carbamoyl phosphate. Tetramer of heterodimers (alpha,beta)4. Mg(2+) serves as cofactor. It depends on Mn(2+) as a cofactor.

It catalyses the reaction hydrogencarbonate + L-glutamine + 2 ATP + H2O = carbamoyl phosphate + L-glutamate + 2 ADP + phosphate + 2 H(+). The enzyme catalyses hydrogencarbonate + NH4(+) + 2 ATP = carbamoyl phosphate + 2 ADP + phosphate + 2 H(+). The protein operates within amino-acid biosynthesis; L-arginine biosynthesis; carbamoyl phosphate from bicarbonate: step 1/1. It participates in pyrimidine metabolism; UMP biosynthesis via de novo pathway; (S)-dihydroorotate from bicarbonate: step 1/3. Functionally, large subunit of the glutamine-dependent carbamoyl phosphate synthetase (CPSase). CPSase catalyzes the formation of carbamoyl phosphate from the ammonia moiety of glutamine, carbonate, and phosphate donated by ATP, constituting the first step of 2 biosynthetic pathways, one leading to arginine and/or urea and the other to pyrimidine nucleotides. The large subunit (synthetase) binds the substrates ammonia (free or transferred from glutamine from the small subunit), hydrogencarbonate and ATP and carries out an ATP-coupled ligase reaction, activating hydrogencarbonate by forming carboxy phosphate which reacts with ammonia to form carbamoyl phosphate. The protein is Carbamoyl phosphate synthase large chain of Methanosarcina acetivorans (strain ATCC 35395 / DSM 2834 / JCM 12185 / C2A).